A 336-amino-acid chain; its full sequence is C2H2 finger domain transcription factor mtfA (336 aa).

Residues 1–245 are disordered; that stretch reads MDVASLISPS…PSPGHQQMIS (245 aa). 2 stretches are compositionally biased toward polar residues: residues 7 to 29 and 36 to 56; these read ISPSESDTVPTFRSRSIQNSSAS and EQSTGSYFSAVPTHTTSYSRT. Residues 136–149 show a composition bias toward low complexity; the sequence is SPSTSSVSAASSSA. The segment covering 168–181 has biased composition (polar residues); sequence TDRSSISSQGSVQH. Residues 182–210 show a composition bias toward low complexity; sequence AASAPYASPAPSVSSFSSPIEPSTPSTAA. Over residues 216-245 the composition is skewed to polar residues; that stretch reads PAPNTFQNPSPFPQTSTASLPSPGHQQMIS. C2H2-type zinc fingers lie at residues 272–294 and 300–325; these read YICRTCHKAFSRPSSLRIHSHSH and FRCTHAGCGKAFSVRSNMKRHERGCH.

It is found in the nucleus. Transcription factor that controls morphogenesis and virulence. Acts as a positive regulator of gliotixin and protease production. The chain is C2H2 finger domain transcription factor mtfA from Aspergillus fumigatus (strain CBS 144.89 / FGSC A1163 / CEA10) (Neosartorya fumigata).